The chain runs to 260 residues: Acetylglutamate kinase (260 aa).

Residues 45-46 (GG), Arg67, and Asn159 each bind substrate.

Belongs to the acetylglutamate kinase family. ArgB subfamily.

The protein resides in the cytoplasm. The catalysed reaction is N-acetyl-L-glutamate + ATP = N-acetyl-L-glutamyl 5-phosphate + ADP. The protein operates within amino-acid biosynthesis; L-arginine biosynthesis; N(2)-acetyl-L-ornithine from L-glutamate: step 2/4. In terms of biological role, catalyzes the ATP-dependent phosphorylation of N-acetyl-L-glutamate. This is Acetylglutamate kinase from Aliivibrio fischeri (strain ATCC 700601 / ES114) (Vibrio fischeri).